We begin with the raw amino-acid sequence, 377 residues long: Alternative oxidase, mitochondrial (377 aa).

Residues 149-169 (LSRFIFLESIAAVPGMVAGML) traverse the membrane as a helical segment. Positions 156, 195, and 198 each coordinate Fe cation. A helical transmembrane segment spans residues 214–234 (ILIIGAQGVYFNAMFVAYLIS). 3 residues coordinate Fe cation: E246, E303, and H306.

Belongs to the alternative oxidase family. Requires Fe cation as cofactor.

Its subcellular location is the mitochondrion inner membrane. Its function is as follows. Catalyzes cyanide-resistant oxygen consumption. May increase respiration when the cytochrome respiratory pathway is restricted, or in response to low temperatures. The sequence is that of Alternative oxidase, mitochondrial (AOX1) from Pyricularia oryzae (strain 70-15 / ATCC MYA-4617 / FGSC 8958) (Rice blast fungus).